The following is a 159-amino-acid chain: Ribosomal RNA large subunit methyltransferase H (159 aa).

S-adenosyl-L-methionine-binding positions include Leu-76, Gly-107, and 126–131; that span reads ISSLTL.

This sequence belongs to the RNA methyltransferase RlmH family. In terms of assembly, homodimer.

The protein localises to the cytoplasm. It catalyses the reaction pseudouridine(1915) in 23S rRNA + S-adenosyl-L-methionine = N(3)-methylpseudouridine(1915) in 23S rRNA + S-adenosyl-L-homocysteine + H(+). Its function is as follows. Specifically methylates the pseudouridine at position 1915 (m3Psi1915) in 23S rRNA. The chain is Ribosomal RNA large subunit methyltransferase H from Cupriavidus metallidurans (strain ATCC 43123 / DSM 2839 / NBRC 102507 / CH34) (Ralstonia metallidurans).